Reading from the N-terminus, the 243-residue chain is 2,3-bisphosphoglycerate-dependent phosphoglycerate mutase (243 aa).

Residues 8–15, 21–22, arginine 60, 87–90, lysine 98, 114–115, and 183–184 contribute to the substrate site; these read RHGQSEWN, TG, ERHY, RR, and GN. Catalysis depends on histidine 9, which acts as the Tele-phosphohistidine intermediate. The active-site Proton donor/acceptor is the glutamate 87.

Belongs to the phosphoglycerate mutase family. BPG-dependent PGAM subfamily. Homodimer.

It catalyses the reaction (2R)-2-phosphoglycerate = (2R)-3-phosphoglycerate. Its pathway is carbohydrate degradation; glycolysis; pyruvate from D-glyceraldehyde 3-phosphate: step 3/5. Its function is as follows. Catalyzes the interconversion of 2-phosphoglycerate and 3-phosphoglycerate. The protein is 2,3-bisphosphoglycerate-dependent phosphoglycerate mutase of Maricaulis maris (strain MCS10) (Caulobacter maris).